The sequence spans 119 residues: Large ribosomal subunit protein bL20c (119 aa).

The protein belongs to the bacterial ribosomal protein bL20 family.

Its subcellular location is the plastid. It localises to the chloroplast. Binds directly to 23S ribosomal RNA and is necessary for the in vitro assembly process of the 50S ribosomal subunit. It is not involved in the protein synthesizing functions of that subunit. In Saccharum hybrid (Sugarcane), this protein is Large ribosomal subunit protein bL20c.